We begin with the raw amino-acid sequence, 963 residues long: Protein translocase subunit SecA (963 aa).

ATP-binding positions include glutamine 87, 105–109, and aspartate 524; that span reads GEGKT. Zn(2+)-binding residues include cysteine 946, cysteine 948, cysteine 957, and histidine 958.

This sequence belongs to the SecA family. In terms of assembly, monomer and homodimer. Part of the essential Sec protein translocation apparatus which comprises SecA, SecYEG and auxiliary proteins SecDF-YajC and YidC. Zn(2+) is required as a cofactor.

Its subcellular location is the cell inner membrane. The protein localises to the cytoplasm. It catalyses the reaction ATP + H2O + cellular proteinSide 1 = ADP + phosphate + cellular proteinSide 2.. Its function is as follows. Part of the Sec protein translocase complex. Interacts with the SecYEG preprotein conducting channel. Has a central role in coupling the hydrolysis of ATP to the transfer of proteins into and across the cell membrane, serving both as a receptor for the preprotein-SecB complex and as an ATP-driven molecular motor driving the stepwise translocation of polypeptide chains across the membrane. The polypeptide is Protein translocase subunit SecA (Methylobacterium radiotolerans (strain ATCC 27329 / DSM 1819 / JCM 2831 / NBRC 15690 / NCIMB 10815 / 0-1)).